Consider the following 1336-residue polypeptide: Vascular endothelial growth factor receptor 1 (1336 aa).

The signal sequence occupies residues 1–22 (MVSCWDTAVLPCALLGCLLLTG). Over 23–758 (YCSGSKLKGP…QGTSDKSNLE (736 aa)) the chain is Extracellular. 7 consecutive Ig-like C2-type domains span residues 32 to 121 (PELS…KKME), 151 to 214 (GREL…VNGH), 230 to 327 (LDVQ…TSVH), 335 to 421 (SVKH…LTAT), 429 to 549 (QIYE…RDIR), 556 to 655 (PNGF…EVLV), and 661 to 747 (PLLL…AYLT). 2 disulfides stabilise this stretch: C53-C107 and C158-C207. Residues N100, N164, N196, and N251 are each glycosylated (N-linked (GlcNAc...) asparagine). C252 and C311 are joined by a disulfide. 8 N-linked (GlcNAc...) asparagine glycosylation sites follow: N323, N417, N474, N516, N597, N625, N666, and N713. Cystine bridges form between C454/C535 and C577/C636. C682 and C731 form a disulfide bridge. Residues 759–780 (LITLTCTCVAATLFWLLLTLFI) form a helical membrane-spanning segment. The Cytoplasmic segment spans residues 781-1336 (RKLKRSSSEV…SVVLYSSPPA (556 aa)). The Protein kinase domain occupies 827–1158 (LKLGKSLGRG…ELVEKLGDLL (332 aa)). Residues 833–841 (LGRGAFGKV) and K861 contribute to the ATP site. Y914 bears the Phosphotyrosine; by autocatalysis mark. Residues 941–957 (KKEKLEPDLEQDQKPRL) are compositionally biased toward basic and acidic residues. Positions 941 to 982 (KKEKLEPDLEQDQKPRLDSVSSSESFTSSGFQEDKSVSDVEG) are disordered. Residues 959–969 (SVSSSESFTSS) show a composition bias toward low complexity. The active-site Proton acceptor is D1022. 6 positions are modified to phosphotyrosine; by autocatalysis: Y1053, Y1169, Y1213, Y1242, Y1325, and Y1331. The disordered stretch occupies residues 1304–1326 (RQEDEDDPELGKESCCSPPPDYN).

It belongs to the protein kinase superfamily. Tyr protein kinase family. CSF-1/PDGF receptor subfamily. As to quaternary structure, interacts with VEGFA, VEGFB and PGF. Monomer in the absence of bound VEGFA, VEGFB or PGF. Homodimer in the presence of bound VEGFA, VEGFB and PGF. Can also form a heterodimer with KDR. Interacts (tyrosine phosphorylated) with CBL, CRK, GRB2, NCK1, PIK3R1, PLCG, PSEN1 and PTPN11. Probably interacts with PTPRB. Interacts with RACK1. Identified in a complex with CBL and CD2AP. N-glycosylated. In terms of processing, ubiquitinated after VEGFA-mediated autophosphorylation, leading to proteolytic degradation. Post-translationally, autophosphorylated on tyrosine residues upon ligand binding. Autophosphorylation occurs in trans, i.e. one subunit of the dimeric receptor phosphorylates tyrosine residues on the other subunit. Phosphorylation at Tyr-1169 is important for interaction with PLCG. Phosphorylation at Tyr-1213 is important for interaction with PIK3R1, PTPN11, GRB2, and PLCG. Phosphorylation at Tyr-1331 is important for endocytosis and for interaction with CBL, NCK1 and CRK. Is probably dephosphorylated by PTPRB.

It localises to the cell membrane. The protein localises to the endosome. The catalysed reaction is L-tyrosyl-[protein] + ATP = O-phospho-L-tyrosyl-[protein] + ADP + H(+). Its activity is regulated as follows. Present in an inactive conformation in the absence of bound ligand. Binding of VEGFA, VEGFB or PGF leads to dimerization and activation by autophosphorylation on tyrosine residues. Functionally, tyrosine-protein kinase that acts as a cell-surface receptor for VEGFA, VEGFB and PGF, and plays an essential role in the development of embryonic vasculature, the regulation of angiogenesis, cell survival, cell migration, macrophage function, chemotaxis, and cancer cell invasion. Acts as a positive regulator of postnatal retinal hyaloid vessel regression. May play an essential role as a negative regulator of embryonic angiogenesis by inhibiting excessive proliferation of endothelial cells. Can promote endothelial cell proliferation, survival and angiogenesis in adulthood. Its function in promoting cell proliferation seems to be cell-type specific. Promotes PGF-mediated proliferation of endothelial cells, and proliferation of some types of cancer cells, but does not promote proliferation of normal fibroblasts. Has very high affinity for VEGFA and relatively low protein kinase activity; may function as a negative regulator of VEGFA signaling by limiting the amount of free VEGFA and preventing its binding to KDR. Modulates KDR signaling by forming heterodimers with KDR. Ligand binding leads to the activation of several signaling cascades. Activation of PLCG leads to the production of the cellular signaling molecules diacylglycerol and inositol 1,4,5-trisphosphate and the activation of protein kinase C. Mediates phosphorylation of PIK3R1, the regulatory subunit of phosphatidylinositol 3-kinase, leading to the activation of phosphatidylinositol kinase and the downstream signaling pathway. Mediates activation of MAPK1/ERK2, MAPK3/ERK1 and the MAP kinase signaling pathway, as well as of the AKT1 signaling pathway. Phosphorylates SRC, YES1 and PLCG, and may also phosphorylate CBL. Promotes phosphorylation of AKT1 and PTK2/FAK1. This is Vascular endothelial growth factor receptor 1 (Flt1) from Rattus norvegicus (Rat).